The primary structure comprises 139 residues: Arsenate reductase (139 aa).

Catalysis depends on nucleophile residues C10, C82, and C89. 2 disulfide bridges follow: C10–C82 and C82–C89.

The protein belongs to the low molecular weight phosphotyrosine protein phosphatase family. Thioredoxin-coupled ArsC subfamily.

The protein resides in the cytoplasm. The catalysed reaction is arsenate + [thioredoxin]-dithiol + H(+) = arsenite + [thioredoxin]-disulfide + H2O. In terms of biological role, catalyzes the reduction of arsenate [As(V)] to arsenite [As(III)]. The sequence is that of Arsenate reductase from Shouchella clausii (strain KSM-K16) (Alkalihalobacillus clausii).